Consider the following 400-residue polypeptide: Cysteine desulfurase (400 aa).

Residues Gly-71–Thr-72, Asn-150, Gln-178, and Ser-198–His-200 each bind pyridoxal 5'-phosphate. An N6-(pyridoxal phosphate)lysine modification is found at Lys-201. Residue Thr-236 coordinates pyridoxal 5'-phosphate. Cys-324 functions as the Cysteine persulfide intermediate in the catalytic mechanism. Residue Cys-324 participates in [2Fe-2S] cluster binding.

This sequence belongs to the class-V pyridoxal-phosphate-dependent aminotransferase family. NifS/IscS subfamily. Homodimer. Requires pyridoxal 5'-phosphate as cofactor.

The enzyme catalyses (sulfur carrier)-H + L-cysteine = (sulfur carrier)-SH + L-alanine. Functionally, catalyzes the removal of elemental sulfur atoms from cysteine to produce alanine. Seems to participate in the biosynthesis of the nitrogenase metalloclusters by providing the inorganic sulfur required for the Fe-S core formation. This chain is Cysteine desulfurase, found in Nostoc sp. (strain PCC 7120 / SAG 25.82 / UTEX 2576).